The chain runs to 127 residues: Large ribosomal subunit protein uL24 (127 aa).

The protein belongs to the universal ribosomal protein uL24 family. As to quaternary structure, part of the 50S ribosomal subunit.

In terms of biological role, one of two assembly initiator proteins, it binds directly to the 5'-end of the 23S rRNA, where it nucleates assembly of the 50S subunit. One of the proteins that surrounds the polypeptide exit tunnel on the outside of the subunit. This is Large ribosomal subunit protein uL24 from Leptospira biflexa serovar Patoc (strain Patoc 1 / ATCC 23582 / Paris).